The sequence spans 361 residues: Phosphoserine aminotransferase (361 aa).

Arginine 43 is a binding site for L-glutamate. Pyridoxal 5'-phosphate contacts are provided by residues 77 to 78 (AS), tryptophan 103, threonine 153, aspartate 173, and glutamine 196. Residue lysine 197 is modified to N6-(pyridoxal phosphate)lysine. 238-239 (NT) contributes to the pyridoxal 5'-phosphate binding site.

Belongs to the class-V pyridoxal-phosphate-dependent aminotransferase family. SerC subfamily. Homodimer. Pyridoxal 5'-phosphate is required as a cofactor.

It localises to the cytoplasm. It carries out the reaction O-phospho-L-serine + 2-oxoglutarate = 3-phosphooxypyruvate + L-glutamate. The enzyme catalyses 4-(phosphooxy)-L-threonine + 2-oxoglutarate = (R)-3-hydroxy-2-oxo-4-phosphooxybutanoate + L-glutamate. Its pathway is amino-acid biosynthesis; L-serine biosynthesis; L-serine from 3-phospho-D-glycerate: step 2/3. Its function is as follows. Catalyzes the reversible conversion of 3-phosphohydroxypyruvate to phosphoserine and of 3-hydroxy-2-oxo-4-phosphonooxybutanoate to phosphohydroxythreonine. This Bacillus anthracis (strain A0248) protein is Phosphoserine aminotransferase.